The following is a 177-amino-acid chain: Large ribosomal subunit protein uL6 (177 aa).

This sequence belongs to the universal ribosomal protein uL6 family. Part of the 50S ribosomal subunit.

This protein binds to the 23S rRNA, and is important in its secondary structure. It is located near the subunit interface in the base of the L7/L12 stalk, and near the tRNA binding site of the peptidyltransferase center. The protein is Large ribosomal subunit protein uL6 of Rickettsia peacockii (strain Rustic).